The chain runs to 469 residues: Probable NADPH:adrenodoxin oxidoreductase, mitochondrial (469 aa).

The N-terminal 38 residues, 1 to 38 (MLSRFIKRTYSTQTSSPVVGIIGSGPAAFYTAHRLLRN), are a transit peptide targeting the mitochondrion. The FAD site is built by Ala-27, Glu-48, Leu-56, and Val-92. Residues 164 to 167 (HGNV), 208 to 209 (RR), and Glu-220 each bind NADP(+). Residues Trp-375 and 382-384 (GVI) each bind FAD. Gly-382 lines the NADP(+) pocket.

The protein belongs to the ferredoxin--NADP reductase type 1 family. The cofactor is FAD.

Its subcellular location is the mitochondrion inner membrane. The enzyme catalyses 2 reduced [adrenodoxin] + NADP(+) + H(+) = 2 oxidized [adrenodoxin] + NADPH. Functionally, adrenodoxin reductase transfers electrons from NADPH to adrenodoxin, which is involved in heme A biosynthesis and in iron-sulfur cluster assembly. Involved in the electron transfer to heme A synthase etp1(cd), a heme protein that catalyzes the conversion of heme O to heme A. Required for the de novo synthesis of Fe-S clusters on iron sulfur cluster assembly protein isu1. Involved in electron delivery for Fe-S cluster synthesis. Essential for coenzyme Q biosynthesis. May be involved in the electron transfer required for the hydroxylation reaction performed by coq6. May play a role in cellular and mitochondrial iron homeostasis. The sequence is that of Probable NADPH:adrenodoxin oxidoreductase, mitochondrial (arh1) from Schizosaccharomyces pombe (strain 972 / ATCC 24843) (Fission yeast).